The following is a 76-amino-acid chain: uncharacterized protein (76 aa).

3 helical membrane-spanning segments follow: residues 2 to 22, 28 to 48, and 56 to 76; these read LKVA…YSLF, LLIV…VEAI, and EYLL…KFII.

It is found in the cell membrane. This is an uncharacterized protein from Bacillus subtilis (strain 168).